The following is an 893-amino-acid chain: Alanine--tRNA ligase (893 aa).

Zn(2+)-binding residues include His-575, His-579, Cys-677, and His-681.

The protein belongs to the class-II aminoacyl-tRNA synthetase family. Zn(2+) serves as cofactor.

It localises to the cytoplasm. It carries out the reaction tRNA(Ala) + L-alanine + ATP = L-alanyl-tRNA(Ala) + AMP + diphosphate. In terms of biological role, catalyzes the attachment of alanine to tRNA(Ala) in a two-step reaction: alanine is first activated by ATP to form Ala-AMP and then transferred to the acceptor end of tRNA(Ala). Also edits incorrectly charged Ser-tRNA(Ala) and Gly-tRNA(Ala) via its editing domain. The polypeptide is Alanine--tRNA ligase (Synechococcus sp. (strain CC9311)).